The primary structure comprises 240 residues: Axial regulator YABBY 3 (240 aa).

Residues 30–57 (CSFCDTVLAVSVPPSSLFKTVTVRCGHC) form a C4-type zinc finger. The interval 135 to 156 (DHLQEMPRPPPANRPPEKRQRV) is disordered.

Belongs to the YABBY family. As to quaternary structure, interacts with SPL/NZZ. Interacts with SPEAR2. Binds to LUG and LUH; these complexes promote adaxial cell identity in leaves as well as embryonic shoot apical meristem (SAM) initiation and postembryonic SAM maintenance. As to expression, expressed in abaxial regions of lateral aerial organ primordia leading to cotyledons, leaves, flower meristems, sepals, petals, stamen and carpels, but not in roots.

It localises to the nucleus. Its function is as follows. Involved in the abaxial cell fate determination during embryogenesis and organogenesis. Regulates the initiation of embryonic shoot apical meristem (SAM) development. Contributes to the repression of KNOX genes (STM, KNAT1/BP and KNAT2) to avoid ectopic meristems. Binds DNA without sequence specificity. This Arabidopsis thaliana (Mouse-ear cress) protein is Axial regulator YABBY 3 (YAB3).